We begin with the raw amino-acid sequence, 203 residues long: LexA repressor (203 aa).

A DNA-binding region (H-T-H motif) is located at residues R32–R52. Active-site for autocatalytic cleavage activity residues include S121 and K158.

This sequence belongs to the peptidase S24 family. In terms of assembly, homodimer.

It catalyses the reaction Hydrolysis of Ala-|-Gly bond in repressor LexA.. Represses a number of genes involved in the response to DNA damage (SOS response), including recA and lexA. In the presence of single-stranded DNA, RecA interacts with LexA causing an autocatalytic cleavage which disrupts the DNA-binding part of LexA, leading to derepression of the SOS regulon and eventually DNA repair. The sequence is that of LexA repressor from Aromatoleum aromaticum (strain DSM 19018 / LMG 30748 / EbN1) (Azoarcus sp. (strain EbN1)).